We begin with the raw amino-acid sequence, 500 residues long: NAD(P)H-quinone oxidoreductase chain 4, chloroplastic (500 aa).

Transmembrane regions (helical) follow at residues 4-24 (FPWL…IFFL), 35-55 (YTIF…CYHF), 87-107 (IGPI…AWPV), 113-130 (LFNF…GLFS), 134-154 (LLLF…LLSM), 167-187 (FILY…GIGL), 211-231 (IIFY…IPLH), 242-262 (HYST…YGLV), 272-292 (AHSI…IYAA), 305-325 (IAYS…SITD), 330-350 (GALL…FLAG), 364-384 (MGGI…FSMA), 386-406 (LALP…GIIT), 416-436 (ILIT…SLSM), and 463-483 (FLSI…DFIF).

Belongs to the complex I subunit 4 family.

It is found in the plastid. The protein localises to the chloroplast thylakoid membrane. It catalyses the reaction a plastoquinone + NADH + (n+1) H(+)(in) = a plastoquinol + NAD(+) + n H(+)(out). It carries out the reaction a plastoquinone + NADPH + (n+1) H(+)(in) = a plastoquinol + NADP(+) + n H(+)(out). This chain is NAD(P)H-quinone oxidoreductase chain 4, chloroplastic, found in Coffea arabica (Arabian coffee).